A 544-amino-acid polypeptide reads, in one-letter code: Chaperonin GroEL 1 (544 aa).

ATP is bound by residues 30–33 (TLGP), Lys-51, 87–91 (DGTTT), Gly-415, and Asp-494.

This sequence belongs to the chaperonin (HSP60) family. Forms a cylinder of 14 subunits composed of two heptameric rings stacked back-to-back. Interacts with the co-chaperonin GroES.

The protein localises to the cytoplasm. It carries out the reaction ATP + H2O + a folded polypeptide = ADP + phosphate + an unfolded polypeptide.. Together with its co-chaperonin GroES, plays an essential role in assisting protein folding. The GroEL-GroES system forms a nano-cage that allows encapsulation of the non-native substrate proteins and provides a physical environment optimized to promote and accelerate protein folding. This Syntrophus aciditrophicus (strain SB) protein is Chaperonin GroEL 1.